Consider the following 203-residue polypeptide: Outer-membrane lipoprotein carrier protein (203 aa).

A signal peptide spans 1–21; it reads MKKMAIACALLSSVVASSVWA. The interval 178 to 203 is disordered; sequence QQNGAVDPSKFTFTPPQGVTIDDQRK.

The protein belongs to the LolA family. As to quaternary structure, monomer.

Its subcellular location is the periplasm. Functionally, participates in the translocation of lipoproteins from the inner membrane to the outer membrane. Only forms a complex with a lipoprotein if the residue after the N-terminal Cys is not an aspartate (The Asp acts as a targeting signal to indicate that the lipoprotein should stay in the inner membrane). The sequence is that of Outer-membrane lipoprotein carrier protein from Salmonella agona (strain SL483).